A 379-amino-acid chain; its full sequence is GDSL esterase/lipase EXL2 (379 aa).

The N-terminal stretch at 1-35 (MKRNSINIHHVTSFSSSPFWCVFFLVLLCKTSTNA) is a signal peptide. N-linked (GlcNAc...) asparagine glycosylation is present at N42. S54 acts as the Nucleophile in catalysis. Residues D358 and H361 contribute to the active site.

Belongs to the 'GDSL' lipolytic enzyme family.

Its subcellular location is the secreted. The sequence is that of GDSL esterase/lipase EXL2 (EXL2) from Arabidopsis thaliana (Mouse-ear cress).